We begin with the raw amino-acid sequence, 352 residues long: tRNA-specific 2-thiouridylase MnmA (352 aa).

ATP is bound by residues 6-13 and leucine 32; that span reads AMSGGVDS. Cysteine 101 functions as the Nucleophile in the catalytic mechanism. Cysteine 101 and cysteine 194 form a disulfide bridge. Glycine 125 is a binding site for ATP. Residues 144–146 form an interaction with tRNA region; it reads KDQ. Cysteine 194 (cysteine persulfide intermediate) is an active-site residue.

The protein belongs to the MnmA/TRMU family.

It localises to the cytoplasm. The enzyme catalyses S-sulfanyl-L-cysteinyl-[protein] + uridine(34) in tRNA + AH2 + ATP = 2-thiouridine(34) in tRNA + L-cysteinyl-[protein] + A + AMP + diphosphate + H(+). Catalyzes the 2-thiolation of uridine at the wobble position (U34) of tRNA, leading to the formation of s(2)U34. The protein is tRNA-specific 2-thiouridylase MnmA of Frankia alni (strain DSM 45986 / CECT 9034 / ACN14a).